The chain runs to 312 residues: DNA-directed RNA polymerase subunit alpha (312 aa).

Positions 1-226 are alpha N-terminal domain (alpha-NTD); sequence MIEFEKPIIT…EHLNLFTDLT (226 aa). Positions 243-312 are alpha C-terminal domain (alpha-CTD); it reads DEKVLDRTIE…DLGLGLKNDK (70 aa).

This sequence belongs to the RNA polymerase alpha chain family. As to quaternary structure, homodimer. The RNAP catalytic core consists of 2 alpha, 1 beta, 1 beta' and 1 omega subunit. When a sigma factor is associated with the core the holoenzyme is formed, which can initiate transcription.

The enzyme catalyses RNA(n) + a ribonucleoside 5'-triphosphate = RNA(n+1) + diphosphate. DNA-dependent RNA polymerase catalyzes the transcription of DNA into RNA using the four ribonucleoside triphosphates as substrates. The chain is DNA-directed RNA polymerase subunit alpha from Streptococcus mutans serotype c (strain ATCC 700610 / UA159).